The sequence spans 311 residues: MKVAVLGAAGGIGQALALLLKTQLPAGSKLSLYDIAPVTPGVAVDLSHIPTAVEIKGFAGEDPTPALVGADVVLISAGVARKPGMDRSDLFNINAGIVRNLIEKVAATCPKALVGIITNPVNTTVAIAAEVMKKAGVYDKNRLFGVTTLDVIRSETFIAELKGLNVADVKINVIGGHSGVTILPLLSQVEGVTFSDEEVASLTKRIQNAGTEVVEAKAGGGSATLSMGQAACRFGMSLVRGLQGEANVVECAYVDGGSEHAEFFAQPVLLGKNGIEKVLPYGEVSAFEANARDSMLDTLKGDIKLGVDFVK.

Residues 7–13 (GAAGGIG) and Asp34 contribute to the NAD(+) site. Substrate is bound by residues Arg81 and Arg87. Residues Asn94 and 117-119 (ITN) contribute to the NAD(+) site. 2 residues coordinate substrate: Asn119 and Arg153. Catalysis depends on His177, which acts as the Proton acceptor. Met227 contacts NAD(+).

It belongs to the LDH/MDH superfamily. MDH type 1 family. As to quaternary structure, homodimer.

It carries out the reaction (S)-malate + NAD(+) = oxaloacetate + NADH + H(+). Its function is as follows. Catalyzes the reversible oxidation of malate to oxaloacetate. The sequence is that of Malate dehydrogenase from Shewanella putrefaciens (strain CN-32 / ATCC BAA-453).